The primary structure comprises 170 residues: Photosystem II extrinsic protein V (170 aa).

A signal peptide spans 1 to 33 (MASFFSTLRRSLNRLLIALPVLLGLMISTPAQA). Residues cysteine 70, cysteine 73, histidine 74, and histidine 125 each contribute to the heme c site.

It belongs to the cytochrome c family. PsbV subfamily. In terms of assembly, PSII is composed of 1 copy each of membrane proteins PsbA, PsbB, PsbC, PsbD, PsbE, PsbF, PsbH, PsbI, PsbJ, PsbK, PsbL, PsbM, PsbT, PsbX, PsbY, PsbZ, Psb30/Ycf12, peripheral proteins PsbO, CyanoQ (PsbQ), PsbU, PsbV and a large number of cofactors. It forms dimeric complexes. Requires heme c as cofactor.

It localises to the cellular thylakoid membrane. Functionally, one of the extrinsic, lumenal subunits of photosystem II (PSII). PSII is a light-driven water plastoquinone oxidoreductase, using light energy to abstract electrons from H(2)O, generating a proton gradient subsequently used for ATP formation. The extrinsic proteins stabilize the structure of photosystem II oxygen-evolving complex (OEC), the ion environment of oxygen evolution and protect the OEC against heat-induced inactivation. Low-potential cytochrome c that plays a role in the OEC of PSII. The sequence is that of Photosystem II extrinsic protein V from Synechococcus sp. (strain CC9311).